A 57-amino-acid chain; its full sequence is Large ribosomal subunit protein bL32 (57 aa).

The protein belongs to the bacterial ribosomal protein bL32 family.

The sequence is that of Large ribosomal subunit protein bL32 from Bacillus pumilus (strain SAFR-032).